Reading from the N-terminus, the 43-residue chain is Cytochrome b559 subunit beta (43 aa).

Residues 18–34 traverse the membrane as a helical segment; sequence WLAVHGLAIPTVFFLGG. Heme is bound at residue H22.

The protein belongs to the PsbE/PsbF family. In terms of assembly, heterodimer of an alpha subunit and a beta subunit. PSII is composed of 1 copy each of membrane proteins PsbA, PsbB, PsbC, PsbD, PsbE, PsbF, PsbH, PsbI, PsbJ, PsbK, PsbL, PsbM, PsbT, PsbX, PsbY, PsbZ, Psb30/Ycf12, at least 3 peripheral proteins of the oxygen-evolving complex and a large number of cofactors. It forms dimeric complexes. Heme b serves as cofactor.

It localises to the plastid. The protein resides in the chloroplast thylakoid membrane. Functionally, this b-type cytochrome is tightly associated with the reaction center of photosystem II (PSII). PSII is a light-driven water:plastoquinone oxidoreductase that uses light energy to abstract electrons from H(2)O, generating O(2) and a proton gradient subsequently used for ATP formation. It consists of a core antenna complex that captures photons, and an electron transfer chain that converts photonic excitation into a charge separation. The sequence is that of Cytochrome b559 subunit beta from Thalassiosira pseudonana (Marine diatom).